A 239-amino-acid chain; its full sequence is Apoptosis regulator Bcl-2 (239 aa).

The BH4 signature appears at 10–30 (DNREIVMKYIHYKLSQRGYEW). The interval 39-85 (PPGAAPAPGIFSSQPGHTPHPAASRDPVARTSPLQTPAAPGAAAGPA) is disordered. Phosphothreonine; by MAPK8 is present on Thr69. A Phosphoserine; by MAPK8 and PKC modification is found at Ser70. The span at 75–85 (PAAPGAAAGPA) shows a compositional bias: low complexity. Phosphoserine; by MAPK8 is present on Ser87. The tract at residues 92–107 (VVHLTLRQAGDDFSRR) is required for interaction with SEPTIN4 isoform ARTS. Required XIAP-mediated ubiquitination and apoptosis. The short motif at 93–107 (VHLTLRQAGDDFSRR) is the BH3 element. The BH1 motif lies at 136-155 (ELFRDGVNWGRIVAFFEFGG). A BH2 motif is present at residues 187 to 202 (TWIQDNGGWDAFVELY). A helical membrane pass occupies residues 212–233 (FSWLSLKTLLSLALVGACITLG).

This sequence belongs to the Bcl-2 family. In terms of assembly, forms homodimers, and heterodimers with BAX, BAD, BAK and Bcl-X(L). Heterodimerization with BAX requires intact BH1 and BH2 motifs, and is necessary for anti-apoptotic activity. Part of a complex composed of SEPTIN4 isoform ARTS, XIAP and BCL2, within the complex interacts (via BH3 domain) with SEPTIN4 isoform ARTS and XIAP, SEPTIN4 isoform ARTS acts as a scaffold protein and stabilizes the complex. Component of the complex, at least composed of LRPPRC, BECN1 and BCL2; the interactions prevent BECN1 from forming an autophagy-inducing complex with PIK3C3. Interacts with EI24. Also interacts with APAF1, BBC3, BCL2L1, BNIPL, MRPL41 and TP53BP2. Binding to FKBP8 seems to target BCL2 to the mitochondria and probably interferes with the binding of BCL2 to its targets. Interacts with BAG1 in an ATP-dependent manner. Interacts with RAF1 (the 'Ser-338' and 'Ser-339' phosphorylated form). Interacts (via the BH4 domain) with EGLN3; the interaction prevents the formation of the BAX-BCL2 complex and inhibits the anti-apoptotic activity of BCL2. Interacts with G0S2; this interaction also prevents the formation of the anti-apoptotic BAX-BCL2 complex. Interacts with RTL10/BOP. Interacts with the SCF(FBXO10) complex. Interacts (via the loop between motifs BH4 and BH3) with NLRP1 (via LRR repeats), but not with NLRP2, NLRP3, NLRP4, PYCARD, nor MEFV. Interacts with GIMAP3/IAN4, GIMAP4/IAN1 and GIMAP5/IAN5. Interacts with BCAP31. Interacts with IRF3; the interaction is inhibited by Sendai virus infection. Interacts with BECN1; thereby inhibiting autophagy in non-starvation conditions. Interacts with AMBRA1; thereby inhibiting autophagy. (Microbial infection) Interacts with Toxoplasma gondii ROP17; the interaction probably promotes BCL2 phosphorylation and degradation. In terms of processing, phosphorylation/dephosphorylation on Ser-70 regulates anti-apoptotic activity. Growth factor-stimulated phosphorylation on Ser-70 by PKC is required for the anti-apoptosis activity and occurs during the G2/M phase of the cell cycle. In the absence of growth factors, BCL2 appears to be phosphorylated by other protein kinases such as ERKs and stress-activated kinases. Phosphorylated by MAPK8/JNK1 at Thr-69, Ser-70 and Ser-87, which stimulates starvation-induced autophagy. Dephosphorylated by protein phosphatase 2A (PP2A). Proteolytically cleaved by caspases during apoptosis. The cleaved protein, lacking the BH4 motif, has pro-apoptotic activity, causes the release of cytochrome c into the cytosol promoting further caspase activity. Post-translationally, monoubiquitinated by PRKN, leading to an increase in its stability. Ubiquitinated by SCF(FBXO10), leading to its degradation by the proteasome. Ubiquitinated by XIAP, leading to its degradation by the proteasome. As to expression, expressed in a variety of tissues.

It localises to the mitochondrion outer membrane. It is found in the nucleus membrane. Its subcellular location is the endoplasmic reticulum membrane. The protein resides in the cytoplasm. Functionally, suppresses apoptosis in a variety of cell systems including factor-dependent lymphohematopoietic and neural cells. Regulates cell death by controlling the mitochondrial membrane permeability. Appears to function in a feedback loop system with caspases. Inhibits caspase activity either by preventing the release of cytochrome c from the mitochondria and/or by binding to the apoptosis-activating factor (APAF-1). Also acts as an inhibitor of autophagy: interacts with BECN1 and AMBRA1 during non-starvation conditions and inhibits their autophagy function. May attenuate inflammation by impairing NLRP1-inflammasome activation, hence CASP1 activation and IL1B release. This chain is Apoptosis regulator Bcl-2 (BCL2), found in Homo sapiens (Human).